A 46-amino-acid chain; its full sequence is GVPCLCDSDGPSVRGNTLSGILWLAGCPSGWHNCKKHKPTIGWCCK.

Intrachain disulfides connect C4/C44, C6/C34, and C27/C45.

This sequence belongs to the sea anemone sodium channel inhibitory toxin family. Type I subfamily.

The protein localises to the secreted. It is found in the nematocyst. Binds specifically to voltage-gated sodium channels (Nav), thereby delaying their inactivation during signal transduction. Thus it strongly stimulates mammalian cardiac muscle contraction. The polypeptide is Delta-actitoxin-Avd1d (Anemonia sulcata (Mediterranean snakelocks sea anemone)).